A 674-amino-acid polypeptide reads, in one-letter code: Sodium/hydrogen exchanger 1 (674 aa).

Residues 1-24 (MKLNKSYILIVVLLLSLFYSSVSS) form the signal peptide. A disordered region spans residues 31-65 (KSNNHYNSDNSNNDNKNININNNNDGDGDDDDDNN). Low complexity predominate over residues 37–55 (NSDNSNNDNKNININNNND). Transmembrane regions (helical) follow at residues 120–140 (TIIF…YFII), 144–164 (IPFV…GIVF), 175–195 (VVSF…IFET), 213–233 (MFAV…IYIV), 275–297 (LYIL…YSVV), 314–334 (VVAI…SLIL), 336–356 (WINI…FSYM), 359–379 (VLAG…GITL), 401–421 (TAAF…LTAH), 432–452 (WSIL…CFLL), 460–480 (IPWV…FAFS), and 499–519 (NTLL…YPLL). A disordered region spans residues 591–674 (HELDSNPLRF…NKNNDTLPLI (84 aa)). Over residues 601-618 (DDDEEDDDDEDLDFDSDL) the composition is skewed to acidic residues. The segment covering 627-657 (DSIHQSDNNNNDNGNNNNNNNNIIINNNSQH) has biased composition (low complexity). Residues 662–674 (GSNNKNNDTLPLI) are compositionally biased toward polar residues.

Belongs to the monovalent cation:proton antiporter 1 (CPA1) transporter (TC 2.A.36) family.

The protein resides in the membrane. LY294002, an inhibitor of the catalytic subunit of PI3-kinase, blocks NHE1-dependent (but not NHE1-independent) increase in intracellular pH in response to cAMP. Regulation of intracellular pH homeostasis in response to cAMP, which is essential for chemotaxis. Necessary for F-actin localization and the kinetics of actin polymerization during chemotaxis and cell polarity but not for directional sensing. This is Sodium/hydrogen exchanger 1 (nhe1) from Dictyostelium discoideum (Social amoeba).